A 31-amino-acid polypeptide reads, in one-letter code: Nemertide alpha-2 (31 aa).

3 disulfide bridges follow: Cys-2/Cys-16, Cys-9/Cys-20, and Cys-15/Cys-26. A 4-hydroxyproline mark is found at Pro-28 and Pro-29.

This sequence belongs to the nemertide family. As to expression, confined to the epidermis and to the mucus layer.

The protein resides in the secreted. Its function is as follows. Toxin with similar potency against both insect and mammalian sodium channels (Nav). Delays the inactivation of most Nav channels tested (B.germanica (BgNav1); EC(50)=87.2 nM, human Nav1.1/SCN1A; EC(50)=125.8 nM, rat Nav1.2/SCN2A; EC(50)=97.9 nM, rat Nav1.3/SCN3A; EC(50)=127.7 nM, rat Nav1.4/SCN4A; EC(50)=1150.3 nM, human Nav1.5/SCN5A; EC(50)=149.2 nM, mouse Nav1.6/SCN8A; EC(50)=1361.8 nM, human Nav1.9/SCN9A; EC(50)=1296.7 nM). Inactivation is completely prevented by a concentration of 1 uM, resulting in sustained, non-inactivating current. In addition, the toxin significantly enhances the recovery from inactivation, and the open state is not required for the toxin to interact with the channel. In vivo, injection into brine shrimp (Artemia salina) stops movement or causes death after 24 hours (EC(50)=2.9 uM). This chain is Nemertide alpha-2, found in Lineus longissimus (Bootlace worm).